A 552-amino-acid chain; its full sequence is Urocanate hydratase (552 aa).

NAD(+) contacts are provided by residues 48–49 (GG), Q126, 172–174 (GMG), E192, R197, 238–239 (NA), 259–263 (QTSAH), 269–270 (YV), and Y318. C406 is a catalytic residue. Position 488 (G488) interacts with NAD(+).

It belongs to the urocanase family. NAD(+) is required as a cofactor.

It is found in the cytoplasm. It catalyses the reaction 4-imidazolone-5-propanoate = trans-urocanate + H2O. Its pathway is amino-acid degradation; L-histidine degradation into L-glutamate; N-formimidoyl-L-glutamate from L-histidine: step 2/3. Its function is as follows. Catalyzes the conversion of urocanate to 4-imidazolone-5-propionate. This is Urocanate hydratase from Herpetosiphon aurantiacus (strain ATCC 23779 / DSM 785 / 114-95).